Here is a 777-residue protein sequence, read N- to C-terminus: DISP complex protein LRCH3 (777 aa).

10 LRR repeats span residues 56–79, 81–104, 105–127, 128–150, 152–172, 173–195, 196–218, 220–239, 240–264, and 266–290; these read AAVT…AANH, LTDT…ACHF, VSLE…ILNL, QALT…LCNL, LKVL…IGHL, RHLM…IGNL, EALR…LAEL, LIRL…CYRN, LRHL…CIKG, and VHIF…DRRP. The segment at 56 to 290 is mediates interaction with DOCK7; that stretch reads AAVTGVLSLS…PDLPDYDRRP (235 aa). Phosphoserine is present on residues Ser324, Ser415, and Ser419. A mediates direct interaction with MYO6 region spans residues 382–648; that stretch reads TAEEEEAEVR…DSTDSITGQN (267 aa). A disordered region spans residues 568–590; the sequence is FTPLKSDDRPNALLSSPATETVH. Phosphoserine occurs at positions 611 and 628. The tract at residues 621-653 is disordered; the sequence is ETNKGHASPLPPSAAPTTDSTDSITGQNSRQRE. Positions 635–645 are enriched in low complexity; sequence APTTDSTDSIT. Positions 652–765 constitute a Calponin-homology (CH) domain; sequence REEELELIDQ…VTVQALLELA (114 aa).

Component of the DOCK7-induced septin displacement/DISP complex, at least composed of DOCK7, LRCH3 and MYO6.

It is found in the cytoplasm. Functionally, as part of the DISP complex, may regulate the association of septins with actin and thereby regulate the actin cytoskeleton. The sequence is that of DISP complex protein LRCH3 from Homo sapiens (Human).